A 548-amino-acid chain; its full sequence is Chaperonin GroEL (548 aa).

Residues 30 to 33 (TLGP), lysine 51, 87 to 91 (DGTTT), glycine 415, 479 to 481 (NAA), and aspartate 495 each bind ATP.

Belongs to the chaperonin (HSP60) family. As to quaternary structure, forms a cylinder of 14 subunits composed of two heptameric rings stacked back-to-back. Interacts with the co-chaperonin GroES.

Its subcellular location is the cytoplasm. The catalysed reaction is ATP + H2O + a folded polypeptide = ADP + phosphate + an unfolded polypeptide.. Its function is as follows. Together with its co-chaperonin GroES, plays an essential role in assisting protein folding. The GroEL-GroES system forms a nano-cage that allows encapsulation of the non-native substrate proteins and provides a physical environment optimized to promote and accelerate protein folding. This is Chaperonin GroEL from Methylibium petroleiphilum (strain ATCC BAA-1232 / LMG 22953 / PM1).